The sequence spans 64 residues: Large ribosomal subunit protein bL32 (64 aa).

Positions 1–23 (MAVQKSRVTPSRRGQRRSHDALA) are disordered.

The protein belongs to the bacterial ribosomal protein bL32 family.

The protein is Large ribosomal subunit protein bL32 of Xylella fastidiosa (strain M23).